The chain runs to 347 residues: D-fructose 1,6-bisphosphatase class 2/sedoheptulose 1,7-bisphosphatase (347 aa).

4 residues coordinate Mn(2+): Asp33, Glu57, Asp97, and Glu100. Substrate-binding positions include 100–102 (EGT), Tyr131, 176–178 (RDR), and 198–200 (DGD). Glu225 is a binding site for Mn(2+).

It belongs to the FBPase class 2 family. Homotetramer. It depends on Mn(2+) as a cofactor.

The enzyme catalyses beta-D-fructose 1,6-bisphosphate + H2O = beta-D-fructose 6-phosphate + phosphate. The catalysed reaction is D-sedoheptulose 1,7-bisphosphate + H2O = D-sedoheptulose 7-phosphate + phosphate. The protein operates within carbohydrate biosynthesis; Calvin cycle. Catalyzes the hydrolysis of fructose 1,6-bisphosphate (Fru 1,6-P2) and sedoheptulose 1,7-bisphosphate (Sed 1,7-P2) to fructose 6-phosphate and sedoheptulose 7-phosphate, respectively. This Thermosynechococcus vestitus (strain NIES-2133 / IAM M-273 / BP-1) protein is D-fructose 1,6-bisphosphatase class 2/sedoheptulose 1,7-bisphosphatase.